The chain runs to 101 residues: MAKKGMINRELKREKTVAKYAAKRAELKATIANVNATDEERFDAMLKLQALPRNASPVRLRNRCGLTGRPHGYFRKFGLSRNKLRDTVMQGDVPGVVKASW.

Belongs to the universal ribosomal protein uS14 family. As to quaternary structure, part of the 30S ribosomal subunit. Contacts proteins S3 and S10.

Functionally, binds 16S rRNA, required for the assembly of 30S particles and may also be responsible for determining the conformation of the 16S rRNA at the A site. The chain is Small ribosomal subunit protein uS14 from Acinetobacter baylyi (strain ATCC 33305 / BD413 / ADP1).